Consider the following 746-residue polypeptide: Hyperosmolality-gated Ca2+ permeable channel 2.1 (746 aa).

Transmembrane regions (helical) follow at residues 3–23 (ISALLTSAGINISICIVLLSL), 90–110 (MVIFSIRIFFIVAVICIAFVL), 144–164 (LWVHCLALYIITSAACLLLYF), 357–377 (IATLVGAVAFMFVFLIPVTFI), 405–425 (VITGYLPSVILILFFYAVPPL), 445–465 (ACIKVLYFTIWNVFFVNILSG), 492–512 (AGFFMTYCFTSGWASLACEIM), 560–580 (VIAPLILPFLLIYFFLAYLIY), 601–621 (IFHNTTIFSLILTQIIALGFF), and 623–643 (LKLSTVASGFTIPLILLTLLF). Positions 692-702 (LHSQKSSSKAE) are enriched in polar residues. A disordered region spans residues 692–723 (LHSQKSSSKAECSNPFKKQELPDPEKLKPEEG). Over residues 708 to 723 (KKQELPDPEKLKPEEG) the composition is skewed to basic and acidic residues.

It belongs to the CSC1 (TC 1.A.17) family.

The protein localises to the membrane. Its function is as follows. Acts as an osmosensitive calcium-permeable cation channel. This chain is Hyperosmolality-gated Ca2+ permeable channel 2.1, found in Arabidopsis thaliana (Mouse-ear cress).